Reading from the N-terminus, the 171-residue chain is Secreted thaumatin-like protein calA (171 aa).

A signal peptide spans M1–A18. N-linked (GlcNAc...) asparagine glycans are attached at residues N37 and N141. 2 disulfide bridges follow: C130/C157 and C135/C142.

This sequence belongs to the thaumatin family.

The protein localises to the secreted. The protein resides in the extracellular space. It is found in the extracellular matrix. Its subcellular location is the cell wall. In terms of biological role, secreted thaumatin-like protein that, with cetA, plays an essential role in early conidial germination with a possible role in cell wall remodeling. The sequence is that of Secreted thaumatin-like protein calA from Emericella nidulans (strain FGSC A4 / ATCC 38163 / CBS 112.46 / NRRL 194 / M139) (Aspergillus nidulans).